Reading from the N-terminus, the 104-residue chain is U20-lycotoxin-Ls1d (104 aa).

An N-terminal signal peptide occupies residues 1-30; sequence MFSTSDQVSKMNSRILSALLILGIATCVIA. The 46-residue stretch at 31-76 folds into the WAP domain; it reads GGFCPKSRHPQCNLSYKINDCCAQSDCRVGSVCCVEGCGNVCRAES. 5 cysteine pairs are disulfide-bonded: cysteine 34–cysteine 64, cysteine 42–cysteine 68, cysteine 51–cysteine 63, cysteine 52–cysteine 90, and cysteine 57–cysteine 72.

This sequence belongs to the venom protein 11 family. 02 (wap-2) subfamily. Contains 5 disulfide bonds. Expressed by the venom gland.

It localises to the secreted. In terms of biological role, has antibacterial activity. This chain is U20-lycotoxin-Ls1d, found in Lycosa singoriensis (Wolf spider).